The following is a 184-amino-acid chain: ATP synthase subunit delta (184 aa).

Belongs to the ATPase delta chain family. F-type ATPases have 2 components, F(1) - the catalytic core - and F(0) - the membrane proton channel. F(1) has five subunits: alpha(3), beta(3), gamma(1), delta(1), epsilon(1). CF(0) has four main subunits: a(1), b(1), b'(1) and c(10-14). The alpha and beta chains form an alternating ring which encloses part of the gamma chain. F(1) is attached to F(0) by a central stalk formed by the gamma and epsilon chains, while a peripheral stalk is formed by the delta, b and b' chains.

It is found in the cell inner membrane. F(1)F(0) ATP synthase produces ATP from ADP in the presence of a proton or sodium gradient. F-type ATPases consist of two structural domains, F(1) containing the extramembraneous catalytic core and F(0) containing the membrane proton channel, linked together by a central stalk and a peripheral stalk. During catalysis, ATP synthesis in the catalytic domain of F(1) is coupled via a rotary mechanism of the central stalk subunits to proton translocation. Its function is as follows. This protein is part of the stalk that links CF(0) to CF(1). It either transmits conformational changes from CF(0) to CF(1) or is implicated in proton conduction. This chain is ATP synthase subunit delta, found in Erythrobacter litoralis (strain HTCC2594).